Consider the following 87-residue polypeptide: MNVEEEVGKLKEEIQRLGQKQPDGSYKVTFGVIFNDDRCANIFEALVGTLRAAKKRKIVKYDGELLLQGAHDNVEITLLPPPAVAAA.

The protein belongs to the costars family.

This is Costars family protein from Oryza sativa subsp. indica (Rice).